The sequence spans 695 residues: Nucleoprotein (695 aa).

2 coiled-coil regions span residues 316–341 and 372–399; these read VNVGEQYQQLREAAHDAEVKLQRRHE and QTLAVLSQKREKLARLAAEIENNIVEDQ. Disordered regions lie at residues 424–458 and 483–615; these read QARPVNRPTALPPPVDDKIEHESTEDSSSSSSFVD and TSRE…AREA. Residues 438–447 show a composition bias toward basic and acidic residues; it reads VDDKIEHEST. Polar residues-rich tracts occupy residues 494 to 505 and 537 to 552; these read PGQSQDLDNSQG and TTDSQESIDQPGSDNE. Residues 603–606 carry the PTAP/PSAP motif motif; sequence PSAP.

This sequence belongs to the filoviruses nucleoprotein family. Homooligomer. Homomultimerizes to form the nucleocapsid. Binds to viral genomic RNA. Interacts with VP35 and VP30 to form the nucleocapsid. Also interacts with VP24 and VP40. In terms of processing, phosphorylated.

The protein localises to the virion. It localises to the host cytoplasm. Its function is as follows. Encapsidates the genome, protecting it from nucleases. The encapsidated genomic RNA is termed the nucleocapsid and serves as template for transcription and replication. During replication, encapsidation by NP is coupled to RNA synthesis and all replicative products are resistant to nucleases. The sequence is that of Nucleoprotein (NP) from Lake Victoria marburgvirus (strain Ozolin-75) (MARV).